Consider the following 123-residue polypeptide: Ribonuclease P protein component (123 aa).

This sequence belongs to the RnpA family. Consists of a catalytic RNA component (M1 or rnpB) and a protein subunit.

The enzyme catalyses Endonucleolytic cleavage of RNA, removing 5'-extranucleotides from tRNA precursor.. Its function is as follows. RNaseP catalyzes the removal of the 5'-leader sequence from pre-tRNA to produce the mature 5'-terminus. It can also cleave other RNA substrates such as 4.5S RNA. The protein component plays an auxiliary but essential role in vivo by binding to the 5'-leader sequence and broadening the substrate specificity of the ribozyme. This Streptococcus pneumoniae serotype 4 (strain ATCC BAA-334 / TIGR4) protein is Ribonuclease P protein component.